The chain runs to 266 residues: Putative cysteine-rich repeat secretory protein 20 (266 aa).

Residues methionine 1–serine 33 form the signal peptide. 2 Gnk2-homologous domains span residues tyrosine 40–asparagine 142 and tyrosine 148–phenylalanine 261.

Belongs to the cysteine-rich repeat secretory protein family.

The protein resides in the secreted. The polypeptide is Putative cysteine-rich repeat secretory protein 20 (CRRSP20) (Arabidopsis thaliana (Mouse-ear cress)).